A 313-amino-acid polypeptide reads, in one-letter code: Beta-lactamase BRO-1 (313 aa).

An N-terminal signal peptide occupies residues 1–25 (MQRRHFLQKTLLALPIIFSGNLLTG). Cysteine 26 carries N-palmitoyl cysteine lipidation. Cysteine 26 carries the S-diacylglycerol cysteine lipid modification. Serine 90 acts as the Acyl-ester intermediate in catalysis. A substrate-binding site is contributed by 255-257 (KTG).

It belongs to the class-A beta-lactamase family.

It localises to the cell membrane. The enzyme catalyses a beta-lactam + H2O = a substituted beta-amino acid. This chain is Beta-lactamase BRO-1 (bla), found in Moraxella catarrhalis (Branhamella catarrhalis).